A 491-amino-acid polypeptide reads, in one-letter code: 3-epi-6-deoxocathasterone 23-monooxygenase CYP90D1 (491 aa).

The chain crosses the membrane as a helical span at residues 7–27 (LLFFSFFFFIIIVIFNKINGL). Cysteine 442 contacts heme.

Belongs to the cytochrome P450 family. Heme serves as cofactor. As to expression, expressed in leaf vascular tissue.

The protein localises to the endoplasmic reticulum membrane. It carries out the reaction 3-epi-6-deoxocathasterone + reduced [NADPH--hemoprotein reductase] + O2 = 6-deoxotyphasterol + oxidized [NADPH--hemoprotein reductase] + H2O + H(+). The enzyme catalyses (22S,24R)-22-hydroxy-5alpha-ergostan-3-one + reduced [NADPH--hemoprotein reductase] + O2 = 3-dehydro-6-deoxoteasterone + oxidized [NADPH--hemoprotein reductase] + H2O + H(+). The protein operates within plant hormone biosynthesis; brassinosteroid biosynthesis. In terms of biological role, involved in brassinosteroid (BR) biosynthesis. May convert teasterone (TE) to 3-dehydroteasterone (3DT, 3-DHT), or 6-deoxoteasterone (6-deoxoTE) to 3-dehydro-6-deoxoteasterone (6-deoxo3DT, 6-deoxo3DHT). C-23 hydroxylase that converts directly (22S,24R)-22-hydroxy-5-alpha-ergostan-3-one and 3-epi-6-deoxocathasterone to 3-dehydro-6-deoxoteasterone (6-deoxo3DT, 6-deoxo3DHT) and 6-deoxotyphasterol (6-deoxoTY), respectively. These C-23 hydroxylation shortcuts bypass campestanol, 6-deoxocathasterone, and 6-deoxoteasterone (6-deoxoTE). Also catalyzes the conversion of cathasterone to teasterone (TE), 6-deoxotyphasterol (6-deoxoTY) to 6-deoxocathasterone (6-deoxoCT), (22S,24R)-22-hydroxyergost-4-en-3-one (22-OH-4-en-3-one) to (22R,23R)-22,23-dihydroxy-campest-4-en-3-one (22,23-diOH-4-en-3-one) and (22S)-22-hydroxycampesterol (22-OHCR) to (22R,23R)-22,23-dihydroxycampesterol (22,23-diOHCR). The protein is 3-epi-6-deoxocathasterone 23-monooxygenase CYP90D1 of Arabidopsis thaliana (Mouse-ear cress).